Consider the following 304-residue polypeptide: Calcium release-activated calcium channel protein 1 (304 aa).

A compositionally biased stretch (pro residues) spans 1-11 (MHPEPAPPPNN). A disordered region spans residues 1-49 (MHPEPAPPPNNSNPELPLSGGSSTSGSRRSRRRSGDGEPTGAPPLPPPP). The Cytoplasmic segment spans residues 1–88 (MHPEPAPPPN…KLYLSRAKLK (88 aa)). Positions 3–49 (PEPAPPPNNSNPELPLSGGSSTSGSRRSRRRSGDGEPTGAPPLPPPP) are required for generation of inwardly rectifying CRAC currents. A compositionally biased stretch (low complexity) spans 12–27 (SNPELPLSGGSSTSGS). Residues 39–60 (PTGAPPLPPPPAVSYPDWIGQS) are AKAP5 association region. An interaction with STIM1 region spans residues 71–91 (SMQALSWRKLYLSRAKLKASS). Residues 89 to 106 (ASSRTSALLSGFAMVAMV) traverse the membrane as a helical segment. At 107-120 (EVQLDTDHDYPPGL) the chain is on the extracellular side. A helical transmembrane segment spans residues 121–141 (LIVFSACTTVLVAVHLFALMI). Over 142–174 (STCILPNIEAVSNVHNLNSVKESPHERMHRHIE) the chain is Cytoplasmic. Residues 175–195 (LAWAFSTVIGTLLFLAEVVLL) form a helical membrane-spanning segment. At 196–237 (CWVKFLPLKRQAGQPSPTKPPTEPAVVVANSSNNGGITPGEA) the chain is on the extracellular side. Residue Asn-225 is glycosylated (N-linked (GlcNAc...) asparagine). The helical transmembrane segment at 238–258 (AAIASTAIMVPCGLVFIVFAV) threads the bilayer. At 259 to 304 (HFYRSLVSHKTDRQFQELNELAEFARLQDQLDHRGDHSLTPGTHYA) the chain is on the cytoplasmic side. The interaction with STIM1 stretch occupies residues 275–295 (ELNELAEFARLQDQLDHRGDH). The residue at position 298 (Thr-298) is a Phosphothreonine.

This sequence belongs to the Orai family. As to quaternary structure, oligomerizes in homomeric and heteromeric ORAI complexes. Native CRAC channels most likely consist of hexameric ORAI heteromers, implying that diverse ORAI1, ORAI2 and ORAI3 subunit combinations with distinct biophysical properties can operate in a cell-type specific way. ARC channels are heteropentamers consisting of three ORAI1 and two ORAI3 subunits. Interacts with STIM1 and STIM2; this regulates channel activity. Interacts with CALM; this may displace STIM1 and STIM2 and might thereby modulate channel activity. Interacts (via N-terminus) with AKAP5 upon store depletion. Interacts with CRACR2A/EFCAB4B; the interaction is direct and takes place in absence of Ca(2+). Forms a complex with CRACR2A/EFCAB4B and STIM1 at low concentration of Ca(2+), the complex dissociates at elevated Ca(2+) concentrations. Interacts with ASPH (isoform 8). Interacts with SLC35G1. Interacts with UBQLN1. Interacts with ADCY8; interaction is calcium store depletion independent; interaction occurs in membrane raft; interaction increases markedly after store depletion; positively regulates SOCE-induced adenylate cyclase activity; contributes to the targeting of ADCY8 to discrete regions of the plasma membrane that are shielded from other calcium events. Interacts with EFHB; the interaction takes place upon Ca(2+)-store depletion. Interacts (via N- and C-termini) with ATP2C2 (via N-terminus); this interaction regulates Ca(2+) influx at the plasma membrane. Interacts with TSPAN18; this interaction regulates ORAI1 exit from the endoplasmic (ER), and/or Golgi, and trafficking to the cell surface. N-glycosylated. N-glycosylation inhibits channel activity in T cells. In terms of processing, ubiquitinated. Post-translationally, cys-195 is oxidated, leading to inactivation of channel activity.

It localises to the cell membrane. The protein localises to the basolateral cell membrane. The catalysed reaction is Ca(2+)(in) = Ca(2+)(out). Its activity is regulated as follows. Oxidation at Cys-196 leads to inactivation of channel activity. Pore-forming subunit of two major inward rectifying Ca(2+) channels at the plasma membrane: Ca(2+) release-activated Ca(2+) (CRAC) channels and arachidonate-regulated Ca(2+)-selective (ARC) channels. Assembles with ORAI2 and ORAI3 to form hexameric CRAC channels that mediate Ca(2+) influx upon depletion of endoplasmic reticulum Ca(2+) store and channel activation by Ca(2+) sensor STIM1, a process known as store-operated Ca(2+) entry (SOCE). Various pore subunit combinations may account for distinct CRAC channel spatiotemporal and cell-type specific dynamics. ORAI1 mainly contributes to the generation of Ca(2+) plateaus involved in sustained Ca(2+) entry and is dispensable for cytosolic Ca(2+) oscillations, whereas ORAI2 and ORAI3 generate oscillatory patterns. CRAC channels assemble in Ca(2+) signaling microdomains where Ca(2+) influx is coupled to calmodulin and calcineurin signaling and activation of NFAT transcription factors recruited to ORAI1 via AKAP5. Activates NFATC2/NFAT1 and NFATC3/NFAT4-mediated transcriptional responses. CRAC channels are the main pathway for Ca(2+) influx in T cells and promote the immune response to pathogens by activating NFAT-dependent cytokine and chemokine transcription. Assembles with ORAI3 to form channels that mediate store-independent Ca(2+) influx in response to inflammatory metabolites arachidonate or its derivative leukotriene C4, termed ARC and LRC channels respectively. Plays a prominent role in Ca(2+) influx at the basolateral membrane of mammary epithelial cells independently of the Ca(2+) content of endoplasmic reticulum or Golgi stores. May mediate transepithelial transport of large quantities of Ca(2+) for milk secretion. This Rattus norvegicus (Rat) protein is Calcium release-activated calcium channel protein 1 (Orai1).